The chain runs to 132 residues: Secreted RxLR effector protein RXLR-C22 (132 aa).

A signal peptide spans 1–21 (MRSLVWAVIATLIVLTPFSEA). The short motif at 56 to 74 (RKLQSDSVKKGDSTGLEER) is the RxLR-dEER element. N-linked (GlcNAc...) asparagine glycosylation is present at asparagine 116.

This sequence belongs to the RxLR effector family.

It is found in the secreted. The protein localises to the host Golgi apparatus. In terms of biological role, secreted effector that does not suppress pattern-triggered immunity (PTI) in plant host. The protein is Secreted RxLR effector protein RXLR-C22 of Plasmopara halstedii (Downy mildew of sunflower).